The following is a 452-amino-acid chain: Pup--protein ligase (452 aa).

A Mg(2+)-binding site is contributed by Glu9. Arg53 serves as a coordination point for ATP. Tyr55 contacts Mg(2+). Catalysis depends on Asp57, which acts as the Proton acceptor. Glu63 provides a ligand contact to Mg(2+). Residues Thr66 and Trp419 each coordinate ATP.

The protein belongs to the Pup ligase/Pup deamidase family. Pup-conjugating enzyme subfamily.

It carries out the reaction ATP + [prokaryotic ubiquitin-like protein]-L-glutamate + [protein]-L-lysine = ADP + phosphate + N(6)-([prokaryotic ubiquitin-like protein]-gamma-L-glutamyl)-[protein]-L-lysine.. It participates in protein degradation; proteasomal Pup-dependent pathway. The protein operates within protein modification; protein pupylation. Functionally, catalyzes the covalent attachment of the prokaryotic ubiquitin-like protein modifier Pup to the proteasomal substrate proteins, thereby targeting them for proteasomal degradation. This tagging system is termed pupylation. The ligation reaction involves the side-chain carboxylate of the C-terminal glutamate of Pup and the side-chain amino group of a substrate lysine. In Frankia alni (strain DSM 45986 / CECT 9034 / ACN14a), this protein is Pup--protein ligase.